The chain runs to 342 residues: tRNA-specific 2-thiouridylase MnmA 2 (342 aa).

Catalysis depends on Cys-62, which acts as the Nucleophile. An intrachain disulfide couples Cys-62 to Cys-160. Gly-86 contributes to the ATP binding site. An interaction with tRNA region spans residues 110-112 (KDQ). The active-site Cysteine persulfide intermediate is the Cys-160. Residues 268–269 (RY) form an interaction with tRNA region.

Belongs to the MnmA/TRMU family.

It is found in the cytoplasm. It catalyses the reaction S-sulfanyl-L-cysteinyl-[protein] + uridine(34) in tRNA + AH2 + ATP = 2-thiouridine(34) in tRNA + L-cysteinyl-[protein] + A + AMP + diphosphate + H(+). In terms of biological role, catalyzes the 2-thiolation of uridine at the wobble position (U34) of tRNA, leading to the formation of s(2)U34. This is tRNA-specific 2-thiouridylase MnmA 2 from Syntrophus aciditrophicus (strain SB).